The primary structure comprises 369 residues: Protein phosphatase 1 regulatory inhibitor subunit PPP1R8 homolog (369 aa).

The segment covering 1-11 has biased composition (basic and acidic residues); it reads MYGRSGLDRFK. The tract at residues 1–26 is disordered; it reads MYGRSGLDRFKKSQTSEPFSVSANPP. Positions 13–23 are enriched in polar residues; sequence SQTSEPFSVSA. Residues 87–138 form the FHA domain; the sequence is HIFGRQHQTCDFVLDHQSVSRQHAAVVPHKNGSIFVIDLGSAHGTFVANERL. A disordered region spans residues 345–369; the sequence is VSQPAAETECGGVGEEDDNDDLFGD. Over residues 358–369 the composition is skewed to acidic residues; that stretch reads GEEDDNDDLFGD.

In terms of assembly, interacts with human protein phosphatase PPP1C.

Its function is as follows. Inhibitor of protein-phosphatase 1 (PP1). Binds to and inhibits PP1 activity. This chain is Protein phosphatase 1 regulatory inhibitor subunit PPP1R8 homolog, found in Arabidopsis thaliana (Mouse-ear cress).